Consider the following 912-residue polypeptide: Coiled-coil domain-containing protein 162 (912 aa).

Coiled coils occupy residues 1 to 35 (MFKS…FSFA) and 220 to 276 (VLLG…VVMS).

In Mus musculus (Mouse), this protein is Coiled-coil domain-containing protein 162.